The sequence spans 207 residues: dTTP/UTP pyrophosphatase (207 aa).

Asp86 (proton acceptor) is an active-site residue.

The protein belongs to the Maf family. YhdE subfamily. Requires a divalent metal cation as cofactor.

It localises to the cytoplasm. The catalysed reaction is dTTP + H2O = dTMP + diphosphate + H(+). It catalyses the reaction UTP + H2O = UMP + diphosphate + H(+). Functionally, nucleoside triphosphate pyrophosphatase that hydrolyzes dTTP and UTP. May have a dual role in cell division arrest and in preventing the incorporation of modified nucleotides into cellular nucleic acids. The polypeptide is dTTP/UTP pyrophosphatase (Nitrosospira multiformis (strain ATCC 25196 / NCIMB 11849 / C 71)).